Here is a 718-residue protein sequence, read N- to C-terminus: Protein Smaug homolog 1 (718 aa).

Ser-168 is subject to Phosphoserine. Disordered regions lie at residues 278–323, 416–474, and 572–601; these read ARGP…EEGS, KAYS…LQPH, and NRGF…QYQI. Residues 323–391 form the SAM domain; the sequence is SGMKDVPAWL…ERQNLLKSLE (69 aa). Residue Ser-420 is modified to Phosphoserine. The residue at position 424 (Thr-424) is a Phosphothreonine. A compositionally biased stretch (low complexity) spans 453 to 466; sequence GAAATGATATPSAG. Residue Arg-573 is modified to Omega-N-methylarginine. Ser-580 is modified (phosphoserine).

The protein belongs to the SMAUG family.

The protein resides in the cytoplasm. It localises to the cell projection. The protein localises to the dendrite. Its subcellular location is the synapse. It is found in the synaptosome. Its function is as follows. Acts as a translational repressor of SRE-containing messengers. The chain is Protein Smaug homolog 1 (SAMD4A) from Homo sapiens (Human).